Here is a 345-residue protein sequence, read N- to C-terminus: Mariner Mos1 transposase (345 aa).

The DNA-binding stretch occupies residues 1-112; that stretch reads MSSFVPNKEQ…VSNRLREMGK (112 aa). 2 consecutive DNA-binding regions (H-T-H motif) follow at residues 24 to 55 and 89 to 110; these read TAAE…RFKS and QKQL…LREM. Positions 113 to 125 are linker; the sequence is IQKVGRWVPHELN. Positions 126–345 are catalytic; sequence ERQMERRKNT…CVASDGKYLE (220 aa). The Mg(2+) site is built by Asp-156, Asp-249, and Asp-284.

In terms of assembly, homodimer. The complex has a trans arrangement, with each transposon end recognized by the DNA binding region of one transposase monomer and by the active site of the other monomer. Requires Mg(2+) as cofactor. It depends on Mn(2+) as a cofactor.

Its subcellular location is the nucleus. In terms of biological role, mediates transposition of transposon Mos1 by a 'cut and paste' mechanism. Transposases are sequence-specific nucleases and strand transferases that catalyze transposition through an ordered series of events: sequence-specific binding of transposase to the terminal inverted repeats (IR) present at each end of the transposon, pairing of the transposon IRs in a paired-end complex (PEC), cleavage of one or both DNA strands at each transposon end, capture of target DNA, and strand transfer to insert the transposon at a new site. In Drosophila mauritiana (Fruit fly), this protein is Mariner Mos1 transposase (mariner\T).